Reading from the N-terminus, the 211-residue chain is MWWTPIPEDIVRDPAAFRVGRLTKAHGLKGAVKLELFTDDPDKRFVPGAEFSLQVPESSPWHGRTLTLTELRWYNSHPVGFFDGVADRTAAESLAKAILWMTPPADEAAEPDAWYDHQLVGLTVLRDGVEVGTVSLVDHFPAQDLLHVDTPSGTVLVPFVQAIVPSVDVEAGTLVVTPPLGLFEEIPDETPTAEPTPAEAAEPAPEGDDAR.

Residues 111–182 (PDAWYDHQLV…TLVVTPPLGL (72 aa)) enclose the PRC barrel domain. Residues 184 to 211 (EEIPDETPTAEPTPAEAAEPAPEGDDAR) form a disordered region. Positions 189–204 (ETPTAEPTPAEAAEPA) are enriched in low complexity.

It belongs to the RimM family. Binds ribosomal protein uS19.

Its subcellular location is the cytoplasm. An accessory protein needed during the final step in the assembly of 30S ribosomal subunit, possibly for assembly of the head region. Essential for efficient processing of 16S rRNA. May be needed both before and after RbfA during the maturation of 16S rRNA. It has affinity for free ribosomal 30S subunits but not for 70S ribosomes. This is Ribosome maturation factor RimM from Clavibacter michiganensis subsp. michiganensis (strain NCPPB 382).